A 701-amino-acid chain; its full sequence is DNA ligase (701 aa).

Residues 43–47 (DADYD), 92–93 (SL), and glutamate 126 contribute to the NAD(+) site. Catalysis depends on lysine 128, which acts as the N6-AMP-lysine intermediate. NAD(+)-binding residues include arginine 149, glutamate 186, lysine 302, and lysine 326. Residues cysteine 417, cysteine 420, cysteine 440, and cysteine 446 each coordinate Zn(2+). The BRCT domain maps to 622-701 (ETGSPVTGKT…DEWLALIGET (80 aa)).

This sequence belongs to the NAD-dependent DNA ligase family. LigA subfamily. The cofactor is Mg(2+). It depends on Mn(2+) as a cofactor.

It carries out the reaction NAD(+) + (deoxyribonucleotide)n-3'-hydroxyl + 5'-phospho-(deoxyribonucleotide)m = (deoxyribonucleotide)n+m + AMP + beta-nicotinamide D-nucleotide.. Functionally, DNA ligase that catalyzes the formation of phosphodiester linkages between 5'-phosphoryl and 3'-hydroxyl groups in double-stranded DNA using NAD as a coenzyme and as the energy source for the reaction. It is essential for DNA replication and repair of damaged DNA. This chain is DNA ligase, found in Hyphomonas neptunium (strain ATCC 15444).